The chain runs to 185 residues: GTP-binding protein rhb1 (185 aa).

GTP contacts are provided by S16, G18, K19, S20, S21, V32, Y35, T38, N119, D122, and A150. S20 is a Mg(2+) binding site. The Effector region signature appears at Y35–F43. Mg(2+) is bound at residue T38. C182 is subject to Cysteine methyl ester. C182 carries S-farnesyl cysteine lipidation. The propeptide at V183–A185 is removed in mature form.

It belongs to the small GTPase superfamily. Rheb family.

It localises to the cell membrane. It catalyses the reaction GTP + H2O = GDP + phosphate + H(+). Its function is as follows. Binds GTP and exhibits intrinsic GTPase activity. Regulates entry into stationary phase when extracellular nitrogen levels are adequate for growth. This chain is GTP-binding protein rhb1 (rhb1), found in Schizosaccharomyces pombe (strain 972 / ATCC 24843) (Fission yeast).